The chain runs to 75 residues: Tetrahydromethanopterin S-methyltransferase subunit F (75 aa).

Residues 53-73 traverse the membrane as a helical segment; the sequence is FAGLACGMVFAGVLLVPLLLL.

It belongs to the MtrF family. In terms of assembly, the complex is composed of 8 subunits; MtrA, MtrB, MtrC, MtrD, MtrE, MtrF, MtrG and MtrH.

It localises to the cell membrane. The enzyme catalyses 5-methyl-5,6,7,8-tetrahydromethanopterin + coenzyme M + 2 Na(+)(in) = 5,6,7,8-tetrahydromethanopterin + methyl-coenzyme M + 2 Na(+)(out). It participates in one-carbon metabolism; methanogenesis from CO(2); methyl-coenzyme M from 5,10-methylene-5,6,7,8-tetrahydromethanopterin: step 2/2. Its function is as follows. Part of a complex that catalyzes the formation of methyl-coenzyme M and tetrahydromethanopterin from coenzyme M and methyl-tetrahydromethanopterin. This is an energy-conserving, sodium-ion translocating step. The protein is Tetrahydromethanopterin S-methyltransferase subunit F of Methanopyrus kandleri (strain AV19 / DSM 6324 / JCM 9639 / NBRC 100938).